The chain runs to 371 residues: Peptide chain release factor 2 (371 aa).

N5-methylglutamine is present on Gln-250.

This sequence belongs to the prokaryotic/mitochondrial release factor family. In terms of processing, methylated by PrmC. Methylation increases the termination efficiency of RF2.

The protein resides in the cytoplasm. Functionally, peptide chain release factor 2 directs the termination of translation in response to the peptide chain termination codons UGA and UAA. The chain is Peptide chain release factor 2 from Paramagnetospirillum magneticum (strain ATCC 700264 / AMB-1) (Magnetospirillum magneticum).